The chain runs to 326 residues: Heterodimeric geranylgeranyl pyrophosphate synthase small subunit, chloroplastic (326 aa).

The transit peptide at 1–33 (MLFSGSAIPLSSFCSLPEKPHTLPMKLSPAAIR) directs the protein to the chloroplast. Residues Lys88 and His120 each coordinate isopentenyl diphosphate. Asp127 and Asp133 together coordinate Mg(2+). Arg138 is a dimethylallyl diphosphate binding site. Arg139 serves as a coordination point for isopentenyl diphosphate. The dimethylallyl diphosphate site is built by Lys220 and Gln258. Residues 274–301 (GAEKGMMEMAEELKEKAKKELQVFDNKY) are a coiled coil.

This sequence belongs to the FPP/GGPP synthase family. As to quaternary structure, part of a heterodimeric geranyl(geranyl)diphosphate synthase. Interacts with GGPPS1 or GGPPS2, but not with GGPPS9. Interacts with LIL3.1 and LIL3.2. It depends on Mg(2+) as a cofactor. In terms of tissue distribution, expressed ubiquitously.

The protein resides in the plastid. It is found in the chloroplast thylakoid membrane. Heterodimeric geranyl(geranyl)-diphosphate (GPP) synthase small subunit. The small subunit alone is inactive in vitro while the large subunit GGPPS1 catalyzes mainly the production of geranygeranyl-diphosphate in vitro. Upon association of the two subunits, the product profile changes and the production of gerany-diphosphate is strongly increased. This chain is Heterodimeric geranylgeranyl pyrophosphate synthase small subunit, chloroplastic (GGR), found in Arabidopsis thaliana (Mouse-ear cress).